We begin with the raw amino-acid sequence, 286 residues long: 1D-myo-inositol 2-acetamido-2-deoxy-alpha-D-glucopyranoside deacetylase (286 aa).

3 residues coordinate Zn(2+): His-12, Asp-15, and His-147.

The protein belongs to the MshB deacetylase family. Zn(2+) serves as cofactor.

It carries out the reaction 1D-myo-inositol 2-acetamido-2-deoxy-alpha-D-glucopyranoside + H2O = 1D-myo-inositol 2-amino-2-deoxy-alpha-D-glucopyranoside + acetate. Its function is as follows. Catalyzes the deacetylation of 1D-myo-inositol 2-acetamido-2-deoxy-alpha-D-glucopyranoside (GlcNAc-Ins) in the mycothiol biosynthesis pathway. In Thermobifida fusca (strain YX), this protein is 1D-myo-inositol 2-acetamido-2-deoxy-alpha-D-glucopyranoside deacetylase.